A 451-amino-acid chain; its full sequence is Adenylyltransferase and sulfurtransferase MOCS3-2 (451 aa).

The disordered stretch occupies residues 42 to 62 (GEDSDEAEESSNDMPTPQTKL). A compositionally biased stretch (acidic residues) spans 43-52 (EDSDEAEESS). A Phosphothreonine modification is found at Thr60. ATP-binding positions include Gly99, Asp120, 127–131 (SNLHR), Lys144, and 188–189 (DN). Positions 229 and 232 each coordinate Zn(2+). Cys246 acts as the Glycyl thioester intermediate; for adenylyltransferase activity in catalysis. Residues Cys304 and Cys307 each contribute to the Zn(2+) site. The Rhodanese domain occupies 353 to 449 (QSQPHLLLDV…WTGSVDATFP (97 aa)). Catalysis depends on Cys408, which acts as the Cysteine persulfide intermediate; for sulfurtransferase activity.

In the N-terminal section; belongs to the HesA/MoeB/ThiF family. UBA4 subfamily. The cofactor is Zn(2+).

The protein resides in the cytoplasm. The catalysed reaction is [molybdopterin-synthase sulfur-carrier protein]-C-terminal Gly-Gly + ATP + H(+) = [molybdopterin-synthase sulfur-carrier protein]-C-terminal Gly-Gly-AMP + diphosphate. It catalyses the reaction [molybdopterin-synthase sulfur-carrier protein]-C-terminal Gly-Gly-AMP + S-sulfanyl-L-cysteinyl-[cysteine desulfurase] + AH2 = [molybdopterin-synthase sulfur-carrier protein]-C-terminal-Gly-aminoethanethioate + L-cysteinyl-[cysteine desulfurase] + A + AMP + 2 H(+). It functions in the pathway tRNA modification; 5-methoxycarbonylmethyl-2-thiouridine-tRNA biosynthesis. The protein operates within cofactor biosynthesis; molybdopterin biosynthesis. Its function is as follows. Plays a central role in 2-thiolation of mcm(5)S(2)U at tRNA wobble positions of cytosolic tRNA(Lys), tRNA(Glu) and tRNA(Gln). Also essential during biosynthesis of the molybdenum cofactor. Acts by mediating the C-terminal thiocarboxylation of sulfur carriers URM1 and MOCS2A. Its N-terminus first activates URM1 and MOCS2A as acyl-adenylates (-COAMP), then the persulfide sulfur on the catalytic cysteine is transferred to URM1 and MOCS2A to form thiocarboxylation (-COSH) of their C-terminus. The reaction probably involves hydrogen sulfide that is generated from the persulfide intermediate and that acts as a nucleophile towards URM1 and MOCS2A. Subsequently, a transient disulfide bond is formed. Does not use thiosulfate as sulfur donor; NFS1 probably acting as a sulfur donor for thiocarboxylation reactions. In Drosophila pseudoobscura pseudoobscura (Fruit fly), this protein is Adenylyltransferase and sulfurtransferase MOCS3-2.